A 523-amino-acid chain; its full sequence is UDP-glucuronosyltransferase 3A1 (523 aa).

Residues 1–22 form the signal peptide; sequence MAAHRSWLLVSFFLLEVLLLEA. The Extracellular portion of the chain corresponds to 23–487; the sequence is AKILTISTLS…QPWHEQYMLD (465 aa). The N-linked (GlcNAc...) asparagine glycan is linked to Asn-70. The helical transmembrane segment at 488 to 508 threads the bilayer; that stretch reads VFLFLLGLTLGTLWLSVKVLV. Residues 509–523 lie on the Cytoplasmic side of the membrane; that stretch reads AVTRYLSISRKVKQA.

Belongs to the UDP-glycosyltransferase family. As to expression, highly expressed in kidney, while it is expressed at low levels in liver. Not detected in other tissues examined.

Its subcellular location is the membrane. It carries out the reaction glucuronate acceptor + UDP-alpha-D-glucuronate = acceptor beta-D-glucuronoside + UDP + H(+). Its function is as follows. UDP-glucuronosyltransferases catalyze phase II biotransformation reactions in which lipophilic substrates are conjugated with glucuronic acid to increase water solubility and enhance excretion. They are of major importance in the conjugation and subsequent elimination of potentially toxic xenobiotics and endogenous compounds. This chain is UDP-glucuronosyltransferase 3A1 (Ugt3a1), found in Mus musculus (Mouse).